Here is a 101-residue protein sequence, read N- to C-terminus: UPF0473 protein spr0177 (101 aa).

This sequence belongs to the UPF0473 family.

This is UPF0473 protein spr0177 from Streptococcus pneumoniae (strain ATCC BAA-255 / R6).